Reading from the N-terminus, the 874-residue chain is Alanine--tRNA ligase (874 aa).

Zn(2+)-binding residues include histidine 563, histidine 567, cysteine 664, and histidine 668.

Belongs to the class-II aminoacyl-tRNA synthetase family. Zn(2+) is required as a cofactor.

Its subcellular location is the cytoplasm. The catalysed reaction is tRNA(Ala) + L-alanine + ATP = L-alanyl-tRNA(Ala) + AMP + diphosphate. Catalyzes the attachment of alanine to tRNA(Ala) in a two-step reaction: alanine is first activated by ATP to form Ala-AMP and then transferred to the acceptor end of tRNA(Ala). Also edits incorrectly charged Ser-tRNA(Ala) and Gly-tRNA(Ala) via its editing domain. The protein is Alanine--tRNA ligase of Methylobacillus flagellatus (strain ATCC 51484 / DSM 6875 / VKM B-1610 / KT).